A 626-amino-acid polypeptide reads, in one-letter code: Deoxynucleoside triphosphate triphosphohydrolase SAMHD1 (626 aa).

Met-1 carries the post-translational modification N-acetylmethionine. Over residues 1 to 19 the composition is skewed to basic and acidic residues; it reads MQRADSEQPSKRPRCDDSP. Residues 1–36 form a disordered region; it reads MQRADSEQPSKRPRCDDSPRTPSNTPSAEADWSPGL. Ser-18 is subject to Phosphoserine. 2 positions are modified to phosphothreonine: Thr-21 and Thr-25. Phosphoserine is present on residues Ser-33 and Ser-93. Residues 45-110 enclose the SAM domain; the sequence is WGPEQVCSFL…LSYIQRLVQI (66 aa). Residues Lys-116 and Val-117 each contribute to the GTP site. Residue Asn-119 coordinates dATP. Asn-119 lines the dCTP pocket. Asn-119 lines the dGTP pocket. Asn-119 lines the dTTP pocket. Residues Asp-137, Gln-142, and Arg-145 each coordinate GTP. A dATP-binding site is contributed by Gln-149. Residue Gln-149 coordinates dCTP. Residues Gln-149, Leu-150, Val-156, and Arg-164 each coordinate dGTP. Gln-149 is a binding site for dTTP. 2 residues coordinate dATP: Val-156 and Arg-164. DCTP is bound by residues Val-156 and Arg-164. 2 residues coordinate dTTP: Val-156 and Arg-164. Residues 164-316 enclose the HD domain; the sequence is RFEHSLGVGY…GIDVDKWDYF (153 aa). Residues His-167, His-206, and Asp-207 each contribute to the Mn(2+) site. DATP-binding residues include His-210 and His-215. 2 residues coordinate dCTP: His-210 and His-215. Residues His-210 and His-215 each coordinate dTTP. Residue His-233 is part of the active site. Asp-311 is a binding site for Mn(2+). Residues Lys-312, Tyr-315, Asp-319, Arg-333, Arg-352, Lys-354, Asn-358, and Arg-366 each coordinate dATP. Positions 312, 315, 319, 333, 352, and 354 each coordinate dCTP. Lys-312, Tyr-315, Asp-319, Arg-333, Arg-352, Lys-354, Asn-358, and Arg-366 together coordinate dGTP. Residues Lys-312, Tyr-315, Asp-319, Arg-333, Arg-352, and Lys-354 each coordinate dTTP. Positions 366 and 372 each coordinate dCTP. DGTP contacts are provided by Tyr-374, Gln-375, His-376, and Lys-377. Gln-375, His-376, and Lys-377 together coordinate dATP. Residues Gln-375, His-376, and Lys-377 each coordinate dCTP. Positions 375, 376, and 377 each coordinate dTTP. Residues Arg-451 and Lys-455 each contribute to the GTP site. Residues Lys-467, Lys-469, and Lys-492 each participate in a glycyl lysine isopeptide (Lys-Gly) (interchain with G-Cter in SUMO2) cross-link. Lys-523 is a GTP binding site. Lys-523 serves as a coordination point for dATP. Lys-523 contacts dCTP. Lys-523 lines the dGTP pocket. Lys-523 is a dTTP binding site. Thr-592 bears the (Microbial infection) Phosphothreonine mark. At Thr-592 the chain carries Phosphothreonine; by CDK1. Lys-622 is covalently cross-linked (Glycyl lysine isopeptide (Lys-Gly) (interchain with G-Cter in SUMO2)).

The protein belongs to the SAMHD1 family. Homodimer; in absence of GTP and dNTP. Homotetramer; in GTP- and dNTP-bound form. Interacts with MRE11; leading to stimulate the exonuclease activity of MRE11. Interacts with RBBP8/CtIP. Interacts (via its C-terminus) with CD81. As to quaternary structure, (Microbial infection) Interacts with HIV-2 viral protein Vpx; promoting interaction with a E3 ubiquitin-protein ligase complex containing DCAF1, leading to subsequent ubiquitination and degradation of SAMHD1. Mn(2+) is required as a cofactor. In terms of processing, phosphorylation at Thr-592 by CDK1 acts as a switch to control deoxynucleoside triphosphate (dNTPase)-dependent and -independent functions. Phosphorylation at Thr-592 takes place in cycling cells: it reduces the stability of the homotetramer, impairing the dNTPase activity and subsequent ability to restrict infection by viruses. It also inhibits ability to suppress LINE-1 retrotransposon activity. In contrast, phosphorylation at Thr-592 promotes DNA end resection at stalled replication forks in response to DNA damage. Post-translationally, (Microbial infection) Phosphorylation at Thr-592 by Epstein-Barr virus kinase BGLF4 and human cytomegalovirus/HCMV UL97 leads to a reduced level of dCTPase and dTTPase activity and the loss of viral restriction. (Microbial infection) Ubiquitinated following interaction with HIV-2 viral protein Vpx; Vpx promotes interaction and with a DCX (DDB1-CUL4-X-box) E3 ubiquitin ligase, leading to proteasomal degradation. Expressed in heart, skeletal muscle, spleen, liver, small intestine, placenta, lung and peripheral blood leukocytes. No expression is seen in brain and thymus.

It is found in the nucleus. It localises to the chromosome. The enzyme catalyses a 2'-deoxyribonucleoside 5'-triphosphate + H2O = a 2'-deoxyribonucleoside + triphosphate + H(+). It carries out the reaction dATP + H2O = 2'-deoxyadenosine + triphosphate + H(+). The catalysed reaction is dCTP + H2O = 2'-deoxycytidine + triphosphate + H(+). It catalyses the reaction dGTP + H2O = 2'-deoxyguanosine + triphosphate + H(+). The enzyme catalyses dTTP + H2O = thymidine + triphosphate + H(+). With respect to regulation, allosterically activated and regulated via the combined actions of GTP and dNTPs (dATP, dGTP, dTTP and dCTP): Allosteric site 1 binds GTP, while allosteric site 2 binds dNTP. Allosteric activation promotes the formation of highly active homotetramers. Phosphorylation at Thr-592 impairs homotetramerization, thereby inhibiting dNTPase activity, leading to reduced ability to restrict infection by viruses. In terms of biological role, protein that acts both as a host restriction factor involved in defense response to virus and as a regulator of DNA end resection at stalled replication forks. Has deoxynucleoside triphosphate (dNTPase) activity, which is required to restrict infection by viruses, such as HIV-1: dNTPase activity reduces cellular dNTP levels to levels too low for retroviral reverse transcription to occur, blocking early-stage virus replication in dendritic and other myeloid cells. Likewise, suppresses LINE-1 retrotransposon activity. Not able to restrict infection by HIV-2 virus; because restriction activity is counteracted by HIV-2 viral protein Vpx. In addition to virus restriction, dNTPase activity acts as a regulator of DNA precursor pools by regulating dNTP pools. Phosphorylation at Thr-592 acts as a switch to control dNTPase-dependent and -independent functions: it inhibits dNTPase activity and ability to restrict infection by viruses, while it promotes DNA end resection at stalled replication forks. Functions during S phase at stalled DNA replication forks to promote the resection of gapped or reversed forks: acts by stimulating the exonuclease activity of MRE11, activating the ATR-CHK1 pathway and allowing the forks to restart replication. Its ability to promote degradation of nascent DNA at stalled replication forks is required to prevent induction of type I interferons, thereby preventing chronic inflammation. Ability to promote DNA end resection at stalled replication forks is independent of dNTPase activity. Enhances immunoglobulin hypermutation in B-lymphocytes by promoting transversion mutation. This Homo sapiens (Human) protein is Deoxynucleoside triphosphate triphosphohydrolase SAMHD1.